The sequence spans 516 residues: RNA-binding region-containing protein 3 (516 aa).

Disordered regions lie at residues 1–27, 106–130, 210–254, and 264–283; these read MAAPEQPLPMSRGCQNSSSLSPPRGDR, VHSPCPSLGTEKKKRSDDPVEDDKE, EDYM…DEDR, and ANLQPKRPKPIKQRHVRKKR. Position 21 is a phosphoserine (S21). One can recognise an RRM 1 domain in the interval 27 to 102; the sequence is RTLLVRHLPA…HTLVVEFAKE (76 aa). The residue at position 108 (S108) is a Phosphoserine. Residues 115 to 130 are compositionally biased toward basic and acidic residues; the sequence is TEKKKRSDDPVEDDKE. Residues 217–230 show a composition bias toward pro residues; that stretch reads APLPPTSPQPPEEP. A compositionally biased stretch (basic residues) spans 269 to 283; that stretch reads KRPKPIKQRHVRKKR. Positions 419 to 502 constitute an RRM 2 domain; it reads CRIYVKNLAK…KPMVVQFARS (84 aa).

As to quaternary structure, component of the U11/U12 snRNPs that are part of the U12-type spliceosome. Found in a complex with m(7)G-capped U12 snRNA. Interacts with PDCD7.

Its subcellular location is the nucleus. In terms of biological role, participates in pre-mRNA U12-dependent splicing, performed by the minor spliceosome which removes U12-type introns. U12-type introns comprises less than 1% of all non-coding sequences. Binds to the 3'-stem-loop of m(7)G-capped U12 snRNA. This is RNA-binding region-containing protein 3 (RNPC3) from Bos taurus (Bovine).